A 707-amino-acid polypeptide reads, in one-letter code: Anti-sigma-I factor RsgI9 (707 aa).

The Cytoplasmic segment spans residues 1–149; sequence MKITGVIVRI…NFSRISNIKN (149 aa). The 48-residue stretch at 3–50 folds into the RsgI N-terminal anti-sigma domain; the sequence is ITGVIVRIHKDRAIIRTDDNRLLAVKRHNDMMVGQIVSFDANEVHKVE. The helical transmembrane segment at 150–172 threads the bilayer; the sequence is FSRIASIAAAFVLIFLFGRNVML. Topologically, residues 173-707 are extracellular; the sequence is NNSSDSEYAY…DSEEKKEYIQ (535 aa). A coiled-coil region spans residues 256 to 283; sequence NDKNKKTRDKREEKIDELKETIEQGIEA. The segment at 345–392 is disordered; it reads EDNTELAPTPTPVPPETPEPTPTPTASEATPSNSPVESKSPEAVPELG. Residues 353–367 show a composition bias toward pro residues; it reads TPTPVPPETPEPTPT. Low complexity predominate over residues 368 to 379; it reads PTASEATPSNSP.

The protein resides in the cell membrane. The polypeptide is Anti-sigma-I factor RsgI9 (Acetivibrio thermocellus (strain ATCC 27405 / DSM 1237 / JCM 9322 / NBRC 103400 / NCIMB 10682 / NRRL B-4536 / VPI 7372) (Clostridium thermocellum)).